The sequence spans 383 residues: Queuine tRNA-ribosyltransferase (383 aa).

The active-site Proton acceptor is aspartate 90. Substrate-binding positions include 90-94 (DSGGF), aspartate 144, glutamine 193, and glycine 227. The RNA binding stretch occupies residues 258–264 (GVGTPED). Aspartate 277 functions as the Nucleophile in the catalytic mechanism. The RNA binding; important for wobble base 34 recognition stretch occupies residues 282–286 (TRNAR). Zn(2+) contacts are provided by cysteine 315, cysteine 317, cysteine 320, and histidine 346.

This sequence belongs to the queuine tRNA-ribosyltransferase family. Homodimer. Within each dimer, one monomer is responsible for RNA recognition and catalysis, while the other monomer binds to the replacement base PreQ1. It depends on Zn(2+) as a cofactor.

It catalyses the reaction 7-aminomethyl-7-carbaguanine + guanosine(34) in tRNA = 7-aminomethyl-7-carbaguanosine(34) in tRNA + guanine. It functions in the pathway tRNA modification; tRNA-queuosine biosynthesis. Functionally, catalyzes the base-exchange of a guanine (G) residue with the queuine precursor 7-aminomethyl-7-deazaguanine (PreQ1) at position 34 (anticodon wobble position) in tRNAs with GU(N) anticodons (tRNA-Asp, -Asn, -His and -Tyr). Catalysis occurs through a double-displacement mechanism. The nucleophile active site attacks the C1' of nucleotide 34 to detach the guanine base from the RNA, forming a covalent enzyme-RNA intermediate. The proton acceptor active site deprotonates the incoming PreQ1, allowing a nucleophilic attack on the C1' of the ribose to form the product. After dissociation, two additional enzymatic reactions on the tRNA convert PreQ1 to queuine (Q), resulting in the hypermodified nucleoside queuosine (7-(((4,5-cis-dihydroxy-2-cyclopenten-1-yl)amino)methyl)-7-deazaguanosine). The chain is Queuine tRNA-ribosyltransferase from Ralstonia nicotianae (strain ATCC BAA-1114 / GMI1000) (Ralstonia solanacearum).